The chain runs to 447 residues: Cytochrome c biogenesis protein CcsB (447 aa).

3 helical membrane-spanning segments follow: residues 28-48 (LRLA…GTVI), 87-107 (TWWY…CTFR), and 173-193 (IGPI…IWGA).

This sequence belongs to the Ccs1/CcsB family. May interact with CcsA.

Its subcellular location is the cellular thylakoid membrane. Its function is as follows. Required during biogenesis of c-type cytochromes (cytochrome c6 and cytochrome f) at the step of heme attachment. The polypeptide is Cytochrome c biogenesis protein CcsB (Microcystis aeruginosa (strain NIES-843 / IAM M-2473)).